Consider the following 285-residue polypeptide: E2F-associated phosphoprotein (285 aa).

At M1 the chain carries N-acetylmethionine. Residues 1–30 (MNRLPDDYDPYAVEEPSDEEPALSSSEDEV) are disordered. Over residues 15–30 (EPSDEEPALSSSEDEV) the composition is skewed to acidic residues. S17 is subject to Phosphoserine. T37 is subject to Phosphothreonine. The interval 48–96 (CLTGESESSSEDEFEKEMEAELNSTMKTMEDKLSSLGTGSSSGNGKVAT) is disordered. The segment covering 55–67 (SSSEDEFEKEMEA) has biased composition (acidic residues). Positions 81-92 (SSLGTGSSSGNG) are enriched in low complexity. A phosphoserine mark is found at S109 and S111. The disordered stretch occupies residues 118–144 (VQVTKKKKKKQHKIPTNDELLYDPEKD). The segment covering 121–130 (TKKKKKKQHK) has biased composition (basic residues).

As to quaternary structure, interacts with E2F1. The C-terminal half binds the N-terminal of E2F1. Also interacts with E2F2 and E2F3, but not E2F4. As to expression, ubiquitously expressed. Highest levels in heart, placenta, skeletal muscle and pancreas. Lower levels in brain, lung and kidney. In the brain, expressed in all regions with high levels in the cerebellum and cerebral cortex. Expressed in COS1 and transformed skin fibroblasts.

Its subcellular location is the cytoplasm. The protein localises to the nucleus. Functionally, may play an important role in the fine-tuning of both major E2F1 activities, the regulation of the cell-cycle and the induction of apoptosis. Promotes S-phase entry, and inhibits p14(ARP) expression. In Homo sapiens (Human), this protein is E2F-associated phosphoprotein (EAPP).